The chain runs to 128 residues: Con-Ins F2 (128 aa).

The N-terminal stretch at 1-24 is a signal peptide; that stretch reads MTTSSYFLLVALGLLLYVCRSSFG. 4 disulfide bridges follow: C29-C104, C41-C107, C53-C120, and C106-C111. A propeptide spans 59-89 (c peptide); that stretch reads LQGGTGKKRGRASLLRKRRAFLSMLKARAKR. 4-carboxyglutamate; partial is present on E115. At S127 the chain carries Serine amide.

The protein belongs to the insulin family. In terms of assembly, heterodimer of A and B chains; disulfide-linked. Expressed by the venom gland.

It is found in the secreted. This venom insulin facilitates prey capture by rapidly inducing hypoglycemic shock. Intraperitoneal injection of this peptide into zebrafish lowers blood glucose with the same potency than human insulin. In vivo, when applied to water, this peptide reduces overall locomotor activity of zebrafish larvae, observed as a significant decrease in the percentage of time spent swimming and movement frequency. The protein is Con-Ins F2 of Conus floridulus (Cone snail).